The chain runs to 305 residues: Putative E3 ubiquitin-protein ligase SINAT1 (305 aa).

The RING-type zinc finger occupies 57–93; that stretch reads CPVCTNLMYPPIHQCPNGHTLCSSCKLRVQNTCPTCR. The SBD stretch occupies residues 107–300; sequence VAESLEVPCR…EELKLRVTGR (194 aa). The segment at 110–170 adopts an SIAH-type zinc-finger fold; that stretch reads SLEVPCRYQN…LVDHLKDDHK (61 aa). 8 residues coordinate Zn(2+): Cys-115, Cys-122, His-134, Cys-138, Cys-145, Cys-152, His-164, and His-169.

It belongs to the SINA (Seven in absentia) family. As to quaternary structure, interacts with SINAT6. Interacts with ATG6 and TRAF1A. Interacts with WAV3. Interacts with FREE1. Interacts with ELC/VPS23A.

The protein resides in the endosome. It is found in the multivesicular body. It localises to the cytoplasmic vesicle. The protein localises to the autophagosome. The enzyme catalyses S-ubiquitinyl-[E2 ubiquitin-conjugating enzyme]-L-cysteine + [acceptor protein]-L-lysine = [E2 ubiquitin-conjugating enzyme]-L-cysteine + N(6)-ubiquitinyl-[acceptor protein]-L-lysine.. It functions in the pathway protein modification; protein ubiquitination. E3 ubiquitin-protein ligase that mediates ubiquitination and subsequent proteasomal degradation of target proteins. E3 ubiquitin ligases accept ubiquitin from an E2 ubiquitin-conjugating enzyme in the form of a thioester and then directly transfers the ubiquitin to targeted substrates. It probably triggers the ubiquitin-mediated degradation of different substrates. Mediates the proteasomal-dependent degradation of ATG6, a component of the autophagosome complex. Requires TRAF1A/MUSE14 and TRAF1B/MUSE13 to target ATG6 for ubiquitination and subsequent regulation of autophagosome assembly. Modulates directly the ubiquitination and proteasomal-dependent degradation of FREE1, a component of the ESCRT-I complex. Modulates directly the ubiquitination and proteasomal-dependent degradation of ELC/VPS23A, a component of the ESCRT-I complex. This Arabidopsis thaliana (Mouse-ear cress) protein is Putative E3 ubiquitin-protein ligase SINAT1.